A 767-amino-acid polypeptide reads, in one-letter code: Phosphoribosylformylglycinamidine synthase subunit PurL (767 aa).

His46 is a catalytic residue. Positions 49 and 88 each coordinate ATP. A Mg(2+)-binding site is contributed by Glu90. Residues 91 to 94 (SHNH) and Arg113 each bind substrate. His92 (proton acceptor) is an active-site residue. Asp114 contacts Mg(2+). Gln237 is a substrate binding site. Asp265 lines the Mg(2+) pocket. Residue 309-311 (ESQ) coordinates substrate. The ATP site is built by Asp498 and Gly535. A Mg(2+)-binding site is contributed by Asn536. Residue Ser538 coordinates substrate.

It belongs to the FGAMS family. As to quaternary structure, monomer. Part of the FGAM synthase complex composed of 1 PurL, 1 PurQ and 2 PurS subunits.

The protein resides in the cytoplasm. It catalyses the reaction N(2)-formyl-N(1)-(5-phospho-beta-D-ribosyl)glycinamide + L-glutamine + ATP + H2O = 2-formamido-N(1)-(5-O-phospho-beta-D-ribosyl)acetamidine + L-glutamate + ADP + phosphate + H(+). It functions in the pathway purine metabolism; IMP biosynthesis via de novo pathway; 5-amino-1-(5-phospho-D-ribosyl)imidazole from N(2)-formyl-N(1)-(5-phospho-D-ribosyl)glycinamide: step 1/2. Functionally, part of the phosphoribosylformylglycinamidine synthase complex involved in the purines biosynthetic pathway. Catalyzes the ATP-dependent conversion of formylglycinamide ribonucleotide (FGAR) and glutamine to yield formylglycinamidine ribonucleotide (FGAM) and glutamate. The FGAM synthase complex is composed of three subunits. PurQ produces an ammonia molecule by converting glutamine to glutamate. PurL transfers the ammonia molecule to FGAR to form FGAM in an ATP-dependent manner. PurS interacts with PurQ and PurL and is thought to assist in the transfer of the ammonia molecule from PurQ to PurL. The polypeptide is Phosphoribosylformylglycinamidine synthase subunit PurL (Anaeromyxobacter sp. (strain Fw109-5)).